The chain runs to 319 residues: Beta-ketoacyl-[acyl-carrier-protein] synthase III (319 aa).

Active-site residues include cysteine 114 and histidine 246. The interval 247–251 (QANIR) is ACP-binding. The active site involves asparagine 276.

This sequence belongs to the thiolase-like superfamily. FabH family. As to quaternary structure, homodimer.

Its subcellular location is the cytoplasm. It carries out the reaction malonyl-[ACP] + acetyl-CoA + H(+) = 3-oxobutanoyl-[ACP] + CO2 + CoA. Its pathway is lipid metabolism; fatty acid biosynthesis. Catalyzes the condensation reaction of fatty acid synthesis by the addition to an acyl acceptor of two carbons from malonyl-ACP. Catalyzes the first condensation reaction which initiates fatty acid synthesis and may therefore play a role in governing the total rate of fatty acid production. Possesses both acetoacetyl-ACP synthase and acetyl transacylase activities. Its substrate specificity determines the biosynthesis of branched-chain and/or straight-chain of fatty acids. The polypeptide is Beta-ketoacyl-[acyl-carrier-protein] synthase III (Thiobacillus denitrificans (strain ATCC 25259 / T1)).